A 433-amino-acid chain; its full sequence is T-box transcription factor T (433 aa).

Residues 49–217 (LWLRFKELTN…YNPFAKAFLD (169 aa)) constitute a DNA-binding region (T-box).

As to quaternary structure, monomer. Binds DNA as a monomer.

It is found in the nucleus. Involved in the transcriptional regulation of genes required for mesoderm formation and differentiation. Binds to a palindromic site (called T site) and activates gene transcription when bound to such a site. This Gallus gallus (Chicken) protein is T-box transcription factor T.